A 238-amino-acid chain; its full sequence is Group 3 late-embryogenesis abundant protein, mitochondrial (238 aa).

A disordered region spans residues 41 to 62 (SSGSGRPADNWAESQKEKAKAG). The stretch at 50–202 (NWAESQKEKA…AGDLKDKAQQ (153 aa)) forms a coiled coil. 6 LEA 11-mer repeat repeats span residues 64 to 74 (KDAQAEVGKVA), 89 to 99 (KDAVKQGANDL), 140 to 150 (KEAAENAWEKT), 151 to 161 (KDVAENLKDKV), 179 to 189 (KDRAQDAASEV), and 190 to 200 (KHKAGDLKDKA). Basic and acidic residues-rich tracts occupy residues 182 to 200 (AQDAASEVKHKAGDLKDKA) and 213 to 225 (DNRKQDQQQRRDS). The interval 182–238 (AQDAASEVKHKAGDLKDKAQQVIHDATTQSGDNRKQDQQQRRDSQGSQSGQNSRSRN) is disordered. Residues 226–238 (QGSQSGQNSRSRN) show a composition bias toward low complexity.

Belongs to the LEA type 4 family.

It localises to the mitochondrion. Mitochondrial heat soluble protein acting as a molecular shield in water-deficient condition. The polypeptide is Group 3 late-embryogenesis abundant protein, mitochondrial (Hypsibius exemplaris (Freshwater tardigrade)).